Consider the following 506-residue polypeptide: Maturase K (506 aa).

The protein belongs to the intron maturase 2 family. MatK subfamily.

The protein localises to the plastid. The protein resides in the chloroplast. Its function is as follows. Usually encoded in the trnK tRNA gene intron. Probably assists in splicing its own and other chloroplast group II introns. This chain is Maturase K, found in Ocimum basilicum (Sweet basil).